A 527-amino-acid polypeptide reads, in one-letter code: Lysine--tRNA ligase (527 aa).

Glu431 and Glu438 together coordinate Mg(2+).

The protein belongs to the class-II aminoacyl-tRNA synthetase family. Homodimer. Mg(2+) serves as cofactor.

It is found in the cytoplasm. It carries out the reaction tRNA(Lys) + L-lysine + ATP = L-lysyl-tRNA(Lys) + AMP + diphosphate. This Chlamydia pneumoniae (Chlamydophila pneumoniae) protein is Lysine--tRNA ligase (lysS).